A 534-amino-acid chain; its full sequence is Probable alpha-galactosidase A (534 aa).

Positions 1–25 (MRLITRWIPLANALASTMPVQVVAS) are cleaved as a signal peptide. Cysteines 47 and 79 form a disulfide. N-linked (GlcNAc...) asparagine glycosylation is found at N50, N88, N94, and N124. C127 and C157 are disulfide-bonded. Residue D155 is the Nucleophile of the active site. N204 is a glycosylation site (N-linked (GlcNAc...) asparagine). The Proton donor role is filled by D213. The Ricin B-type lectin domain maps to 413–534 (CSQVIPTGLI…GLPAGVHVAL (122 aa)). C430 and C443 are joined by a disulfide. N444 is a glycosylation site (N-linked (GlcNAc...) asparagine). A disulfide bridge connects residues C468 and C481.

It belongs to the glycosyl hydrolase 27 family.

The protein resides in the secreted. The catalysed reaction is Hydrolysis of terminal, non-reducing alpha-D-galactose residues in alpha-D-galactosides, including galactose oligosaccharides, galactomannans and galactolipids.. In terms of biological role, hydrolyzes a variety of simple alpha-D-galactoside as well as more complex molecules such as oligosaccharides and polysaccharides. This Aspergillus oryzae (strain ATCC 42149 / RIB 40) (Yellow koji mold) protein is Probable alpha-galactosidase A (aglA).